The primary structure comprises 535 residues: Cytochrome P450 monooxygenase claQ (535 aa).

The next 2 membrane-spanning stretches (helical) occupy residues 7–27 (IGTW…KLVG) and 225–245 (YFAI…NLPT). A heme-binding site is contributed by C472.

The protein belongs to the cytochrome P450 family. The cofactor is heme.

It localises to the membrane. The protein operates within secondary metabolite biosynthesis; terpenoid biosynthesis. Cytochrome P450 monooxygenase; part of the gene cluster that mediates the biosynthesis of clavilactone A, a meroterpenoid that features a unique benzo-fused ten-membered carbocyclic ring unit with an alpha,beta-epoxy-gamma-lactone moiety, forming an intriguing 10/5/3 tricyclic nested skeleton. Cytochrome P450 monooxygenases claO, claP, claQ, claU, and claW are close orthologs, suggesting that a redundant function or pseudogenes are present in the cla cluster. These monoxygenases are not involved in clavilactone A biosynthesis nor its modification. ClaR, ClaS and ClaT are sufficient to produce clavilactone A. The biosynthesis begins with the prenyltransferase claS that transfers geranyl pyrophosphate (GPP) to hydroquinone to produces geranylhydroquinone. The cytochrome P450 monooxygenase claR then catalyzes the diradical coupling reaction between the intramolecular hydroquinone and allyl moieties to form the benzo-fused ten-membered carbocyclic ring unit of wigantol. Finally the cytochrome P450 monooxygenase claT exquisitely and stereoselectively assembles the alpha,beta-epoxy-gamma-lactone moiety, producing clavilactone A via arnebinol A. This Ampulloclitocybe clavipes (Club foot) protein is Cytochrome P450 monooxygenase claQ.